The sequence spans 941 residues: Isoleucine--tRNA ligase (941 aa).

Positions 58-68 (PYANGNIHLGH) match the 'HIGH' region motif. Glu564 lines the L-isoleucyl-5'-AMP pocket. A 'KMSKS' region motif is present at residues 605–609 (KMSKS). Lys608 provides a ligand contact to ATP. Residues Cys904, Cys907, Cys924, and Cys927 each contribute to the Zn(2+) site.

This sequence belongs to the class-I aminoacyl-tRNA synthetase family. IleS type 1 subfamily. As to quaternary structure, monomer. It depends on Zn(2+) as a cofactor.

It localises to the cytoplasm. The catalysed reaction is tRNA(Ile) + L-isoleucine + ATP = L-isoleucyl-tRNA(Ile) + AMP + diphosphate. In terms of biological role, catalyzes the attachment of isoleucine to tRNA(Ile). As IleRS can inadvertently accommodate and process structurally similar amino acids such as valine, to avoid such errors it has two additional distinct tRNA(Ile)-dependent editing activities. One activity is designated as 'pretransfer' editing and involves the hydrolysis of activated Val-AMP. The other activity is designated 'posttransfer' editing and involves deacylation of mischarged Val-tRNA(Ile). The chain is Isoleucine--tRNA ligase from Hahella chejuensis (strain KCTC 2396).